Here is a 76-residue protein sequence, read N- to C-terminus: Conotoxin VnMEKL-021 (76 aa).

An N-terminal signal peptide occupies residues 1 to 19 (MQKLTILLLVAAVLMSTQA). A propeptide spanning residues 20 to 37 (LIKGGGEKRPKEKIKFLS) is cleaved from the precursor. Intrachain disulfides connect Cys51–Cys65, Cys58–Cys69, and Cys64–Cys73.

This sequence belongs to the conotoxin O2 superfamily. In terms of tissue distribution, expressed by the venom duct.

Its subcellular location is the secreted. The polypeptide is Conotoxin VnMEKL-021 (Conus ventricosus (Mediterranean cone)).